The following is a 662-amino-acid chain: Replication protein E1 (662 aa).

Basic and acidic residues predominate over residues 28-38; that stretch reads VDRRTGDKPSS. The segment at 28–60 is disordered; sequence VDRRTGDKPSSDEDEDEDADEGEDFVDFIDDRP. Residues 39 to 55 show a composition bias toward acidic residues; the sequence is DEDEDEDADEGEDFVDF. A Nuclear localization signal motif is present at residues 88–90; sequence KRK. Phosphoserine; by host occurs at positions 94, 98, and 111. The Nuclear export signal signature appears at 110–119; it reads LSPRLDAIKL. The interval 160-197 is disordered; that stretch reads TQDGRQDADEGSGRNVGGNGGQEEERAGGDGEESQTQG. Positions 199-365 are DNA-binding region; that stretch reads QTDKAACGVL…QTMVGHALEE (167 aa). The 151-residue stretch at 464-614 folds into the SF3 helicase domain; sequence VEFIPFLCAF…FPLTTQGEPL (151 aa). Position 490–497 (490–497) interacts with ATP; sequence GPADTGKS. Residue Lys-571 forms a Glycyl lysine isopeptide (Lys-Gly) (interchain with G-Cter in SUMO) linkage. Positions 637-662 are disordered; that stretch reads DPDDEEENGNPSEPFRCVPGQNARTL.

This sequence belongs to the papillomaviridae E1 protein family. Can form hexamers. Interacts with E2 protein; this interaction increases E1 DNA binding specificity. Interacts with host DNA polymerase subunit POLA2. Interacts with host single stranded DNA-binding protein RPA1. Interacts with host TOP1; this interaction stimulates the enzymatic activity of TOP1. In terms of processing, phosphorylated. Sumoylated.

The protein localises to the host nucleus. The catalysed reaction is Couples ATP hydrolysis with the unwinding of duplex DNA by translocating in the 3'-5' direction.. The enzyme catalyses ATP + H2O = ADP + phosphate + H(+). Functionally, ATP-dependent DNA 3'-5' helicase required for initiation of viral DNA replication. It forms a complex with the viral E2 protein. The E1-E2 complex binds to the replication origin which contains binding sites for both proteins. During the initial step, a dimer of E1 interacts with a dimer of protein E2 leading to a complex that binds the viral origin of replication with high specificity. Then, a second dimer of E1 displaces the E2 dimer in an ATP-dependent manner to form the E1 tetramer. Following this, two E1 monomers are added to each half of the site, which results in the formation of two E1 trimers on the viral ori. Subsequently, two hexamers will be created. The double hexamer acts as a bi-directional helicase machinery and unwinds the viral DNA and then recruits the host DNA polymerase to start replication. This is Replication protein E1 from Homo sapiens (Human).